We begin with the raw amino-acid sequence, 275 residues long: Large ribosomal subunit protein uL2 (275 aa).

The disordered stretch occupies residues 236–263 (EGRGKGQHPVTPWGMPTKGYKTRRGRRA).

This sequence belongs to the universal ribosomal protein uL2 family. As to quaternary structure, part of the 50S ribosomal subunit. Forms a bridge to the 30S subunit in the 70S ribosome.

In terms of biological role, one of the primary rRNA binding proteins. Required for association of the 30S and 50S subunits to form the 70S ribosome, for tRNA binding and peptide bond formation. It has been suggested to have peptidyltransferase activity; this is somewhat controversial. Makes several contacts with the 16S rRNA in the 70S ribosome. The polypeptide is Large ribosomal subunit protein uL2 (Pseudothermotoga lettingae (strain ATCC BAA-301 / DSM 14385 / NBRC 107922 / TMO) (Thermotoga lettingae)).